The sequence spans 374 residues: MAGARQAVGEARRIVVKVGSSSLTTAAGGLDADRVDALVDVLAKMRGADKEVVLVSSGAIAAGLAPLGLPRRPRDLARQQAAASVGQGLLVARYTASFARYGVRVGQVLLTSDDMSRRAHHRNASRTLDKLLAMGAFPIVNENDTVATDEIRFGDNDRLAALVAHLVRADLLVLLSDVDGVYDGDPSRPGTSRLAEVRDMGDLAGVDIGSAGKAGVGTGGMVTKVEAARIAAAAGIPVVLTSAVHAADALAGGDTGTYFHATGRRSADRLLWLQHASAPQGALVLDDGAVRAVVEGRKSLLPAGIAGVEGDFAAGDPVELRDGTGRAVARGLVNFDAKEMPRLIGRSTRELARELGPAYEREVVHRDDLVILHP.

Residue Lys17 coordinates ATP. Substrate-binding residues include Ser57, Asp144, and Asn156. Residues 176 to 177 and 218 to 224 each bind ATP; these read SD and TGGMVTK. One can recognise a PUA domain in the interval 280–358; it reads QGALVLDDGA…RELARELGPA (79 aa).

Belongs to the glutamate 5-kinase family.

It localises to the cytoplasm. It catalyses the reaction L-glutamate + ATP = L-glutamyl 5-phosphate + ADP. It functions in the pathway amino-acid biosynthesis; L-proline biosynthesis; L-glutamate 5-semialdehyde from L-glutamate: step 1/2. Its function is as follows. Catalyzes the transfer of a phosphate group to glutamate to form L-glutamate 5-phosphate. The chain is Glutamate 5-kinase from Streptomyces coelicolor (strain ATCC BAA-471 / A3(2) / M145).